Here is a 427-residue protein sequence, read N- to C-terminus: MPSNFFIPDPEGQVPSAEGYFGAFGGKFIPEALVAAVDEVAVEYDKAKSDPEFARELDDLLVHYTGRPSALTEVPRFAAEAGGARIFLKREDLNHTGSHKINNVLGQALLTKRMGKTRVIAETGAGQHGVATATACALFGLDCTIYMGEIDTRRQALNVARMRMLGAEVIAVKSGSRTLKDAINEAFRDWVANVDRTHYLFGTVAGPHPFPAMVRDFHRVIGVEARRQLLEQAGRLPDAAIACVGGGSNAIGLFHAFIPDADVRLIGCEPAGHGVETGEHAATLTAGEPGILHGSRSYVLQDDEGQITEPYSISAGLDYPGIGPEHAYLKDSGRGEYRAVTDDAAMQALRLLSRTEGIIPAIESAHALAGALEVGRELGRDGLLVVNLSGRGDKDMDTAARYFGLYDTDAEVAADGTGAAEIEGDAK.

The residue at position 100 (lysine 100) is an N6-(pyridoxal phosphate)lysine.

Belongs to the TrpB family. As to quaternary structure, tetramer of two alpha and two beta chains. Requires pyridoxal 5'-phosphate as cofactor.

It carries out the reaction (1S,2R)-1-C-(indol-3-yl)glycerol 3-phosphate + L-serine = D-glyceraldehyde 3-phosphate + L-tryptophan + H2O. The protein operates within amino-acid biosynthesis; L-tryptophan biosynthesis; L-tryptophan from chorismate: step 5/5. Functionally, the beta subunit is responsible for the synthesis of L-tryptophan from indole and L-serine. In Streptomyces coelicolor (strain ATCC BAA-471 / A3(2) / M145), this protein is Tryptophan synthase beta chain (trpB).